Consider the following 917-residue polypeptide: Translation initiation factor IF-2 (917 aa).

2 disordered regions span residues 1–84 (MSDG…GRAG) and 150–318 (KESE…DRER). Polar residues predominate over residues 10–27 (DGNNTPSQGGEQTRSSRL). 3 stretches are compositionally biased toward low complexity: residues 69-84 (AAGPGAGAAARGGRAG), 154-177 (QQAAREQAAAEAAARAAEQAAAEA), and 227-236 (SRPAAAAPAR). The span at 265-274 (GAPPAPPRRP) shows a compositional bias: pro residues. Residues 282 to 305 (GGSDRRSGRIDVRAAIEGDDDKTR) are compositionally biased toward basic and acidic residues. The region spanning 416 to 586 (PRAPVVTVMG…LLQSEMLDLK (171 aa)) is the tr-type G domain. The interval 425 to 432 (GHVDHGKT) is G1. 425-432 (GHVDHGKT) contacts GTP. Residues 450–454 (GITQH) are G2. The segment at 472 to 475 (DTPG) is G3. GTP is bound by residues 472–476 (DTPGH) and 526–529 (NKID). The G4 stretch occupies residues 526–529 (NKID). Residues 562 to 564 (SAL) are G5.

It belongs to the TRAFAC class translation factor GTPase superfamily. Classic translation factor GTPase family. IF-2 subfamily.

It is found in the cytoplasm. Its function is as follows. One of the essential components for the initiation of protein synthesis. Protects formylmethionyl-tRNA from spontaneous hydrolysis and promotes its binding to the 30S ribosomal subunits. Also involved in the hydrolysis of GTP during the formation of the 70S ribosomal complex. This Gluconobacter oxydans (strain 621H) (Gluconobacter suboxydans) protein is Translation initiation factor IF-2.